A 211-amino-acid chain; its full sequence is Uracil phosphoribosyltransferase (211 aa).

5-phospho-alpha-D-ribose 1-diphosphate contacts are provided by residues R78, R103, and 130 to 138 (DPMLATGNS). Residues I193 and 198–200 (GDA) contribute to the uracil site. D199 is a binding site for 5-phospho-alpha-D-ribose 1-diphosphate.

The protein belongs to the UPRTase family. The cofactor is Mg(2+).

The enzyme catalyses UMP + diphosphate = 5-phospho-alpha-D-ribose 1-diphosphate + uracil. It functions in the pathway pyrimidine metabolism; UMP biosynthesis via salvage pathway; UMP from uracil: step 1/1. Allosterically activated by GTP. In terms of biological role, catalyzes the conversion of uracil and 5-phospho-alpha-D-ribose 1-diphosphate (PRPP) to UMP and diphosphate. The sequence is that of Uracil phosphoribosyltransferase from Acinetobacter baumannii (strain AB307-0294).